Reading from the N-terminus, the 222-residue chain is Ras-related protein RABA4d (222 aa).

22–29 (GDSAVGKT) contacts GTP. Positions 44 to 52 (SKATIGVEF) match the Effector region motif. GTP contacts are provided by residues 70–74 (DTAGQ), 128–131 (NKCD), and 158–159 (SA). 2 S-geranylgeranyl cysteine lipidation sites follow: cysteine 218 and cysteine 219.

Belongs to the small GTPase superfamily. Rab family. In terms of assembly, interacts with PI4KB1. In terms of tissue distribution, specifically expressed in pollen and localized to the tips of growing pollen tubes.

The protein resides in the cytoplasmic vesicle membrane. Its function is as follows. Intracellular vesicle trafficking and protein transport. Plays an important role in the regulation of pollen tube tip growth. This chain is Ras-related protein RABA4d (RABA4D), found in Arabidopsis thaliana (Mouse-ear cress).